A 452-amino-acid chain; its full sequence is Metacaspase-1 (452 aa).

A disordered region spans residues 1–97 (MYPGAGRPTY…GPPLQGRPRD (97 aa)). A compositionally biased stretch (low complexity) spans 16–41 (QKGPYGQPQYQQQYAPPYPERYQQPY). Catalysis depends on residues His-238 and Cys-294.

Belongs to the peptidase C14B family.

Involved in cell death (apoptosis). This is Metacaspase-1 (MCA1) from Eremothecium gossypii (strain ATCC 10895 / CBS 109.51 / FGSC 9923 / NRRL Y-1056) (Yeast).